A 201-amino-acid polypeptide reads, in one-letter code: 3-isopropylmalate dehydratase small subunit (201 aa).

It belongs to the LeuD family. LeuD type 1 subfamily. In terms of assembly, heterodimer of LeuC and LeuD.

It carries out the reaction (2R,3S)-3-isopropylmalate = (2S)-2-isopropylmalate. It participates in amino-acid biosynthesis; L-leucine biosynthesis; L-leucine from 3-methyl-2-oxobutanoate: step 2/4. Functionally, catalyzes the isomerization between 2-isopropylmalate and 3-isopropylmalate, via the formation of 2-isopropylmaleate. In Shewanella halifaxensis (strain HAW-EB4), this protein is 3-isopropylmalate dehydratase small subunit.